A 658-amino-acid polypeptide reads, in one-letter code: Probable CoA ligase CCL6 (658 aa).

ATP is bound by residues 226-234 (TSGATGEPK), 411-416 (QGYGLT), Asp497, 509-512 (IIDR), and Lys632. Residues 298–411 (DIRFLMDDLQ…RVTSCAALSQ (114 aa)) are SBD1. The SBD2 stretch occupies residues 412–477 (GYGLTESCGG…LRGTTLFSGY (66 aa)).

Belongs to the ATP-dependent AMP-binding enzyme family. In terms of tissue distribution, mostly expressed in glandular trichomes (lupulin glands) after flowering, and, to a lower extent, in stems, leaves, cones and flowers.

It is found in the cytoplasm. The protein resides in the cytosol. This Humulus lupulus (European hop) protein is Probable CoA ligase CCL6.